Reading from the N-terminus, the 688-residue chain is Polyribonucleotide nucleotidyltransferase (688 aa).

Mg(2+) is bound by residues Asp-484 and Asp-490. In terms of domain architecture, KH spans 550–609 (PTTEIFNVAPDKIVEIIGQGGRVIKEIVEKFEVKIDLNKPSGEVKIMGNKERVLKTKEFI). The region spanning 626–688 (DEVLEAQVKR…NKGKIALDLA (63 aa)) is the S1 motif domain.

It belongs to the polyribonucleotide nucleotidyltransferase family. Requires Mg(2+) as cofactor.

It localises to the cytoplasm. It carries out the reaction RNA(n+1) + phosphate = RNA(n) + a ribonucleoside 5'-diphosphate. In terms of biological role, involved in mRNA degradation. Catalyzes the phosphorolysis of single-stranded polyribonucleotides processively in the 3'- to 5'-direction. This chain is Polyribonucleotide nucleotidyltransferase, found in Helicobacter pylori (strain ATCC 700392 / 26695) (Campylobacter pylori).